Reading from the N-terminus, the 544-residue chain is Secreted aspartic protease 9 (544 aa).

Positions 1–17 (MRLNSVALLSLVATALA) are cleaved as a signal peptide. Positions 31-50 (GESKDDLSPEDDSNPRFVKR) are disordered. The Peptidase A1 domain maps to 65–479 (YMATLKIGSN…DLDDYEVSLA (415 aa)). 83–85 (DTG) serves as a coordination point for pepstatin A. A disulfide bridge connects residues Cys98 and Cys195. The active site involves Thr167. 3 N-linked (GlcNAc...) asparagine glycosylation sites follow: Asn212, Asn240, and Asn252. The active site involves Asp371. 371 to 375 (DTGST) contacts pepstatin A. Cys406 and Cys441 form a disulfide bridge. N-linked (GlcNAc...) asparagine glycans are attached at residues Asn422 and Asn499. Positions 500-520 (SSGSGTTSSSGTSTSTSTRHS) are disordered.

Belongs to the peptidase A1 family. Monomer. In terms of processing, the GPI-anchor is attached to the protein in the endoplasmic reticulum and serves to target the protein to the cell surface. There, the glucosamine-inositol phospholipid moiety is cleaved off and the GPI-modified mannoprotein is covalently attached via its lipidless GPI glycan remnant to the 1,6-beta-glucan of the outer cell wall layer.

It localises to the cell membrane. The protein localises to the secreted. It is found in the cell wall. It carries out the reaction Preferential cleavage at the carboxyl of hydrophobic amino acids, but fails to cleave 15-Leu-|-Tyr-16, 16-Tyr-|-Leu-17 and 24-Phe-|-Phe-25 of insulin B chain. Activates trypsinogen, and degrades keratin.. In terms of biological role, secreted aspartic peptidases (SAPs) are a group of ten acidic hydrolases considered as key virulence factors. These enzymes supply the fungus with nutrient amino acids as well as are able to degrade the selected host's proteins involved in the immune defense. Moreover, acts toward human hemoglobin though limited proteolysis to generate a variety of antimicrobial hemocidins, enabling to compete with the other microorganisms of the same physiological niche using the microbicidal peptides generated from the host protein. Functionally, plays a key role in defense against host by cleaving histatin-5 (Hst 5), a peptide from human saliva that carries out fungicidal activity. The cleavage rate decreases in an order of SAP2 &gt; SAP9 &gt; SAP3 &gt; SAP7 &gt; SAP4 &gt; SAP1 &gt; SAP8. The first cleavage occurs between residues 'Lys-17' and 'His-18' of Hst 5, giving DSHAKRHHGYKRKFHEK and HHSHRGY peptides. Simultaneously, the DSHAKRHHGYKRK peptide is also formed. Further fragmentation by SAP9 results in FHEK product. This Candida albicans (Yeast) protein is Secreted aspartic protease 9.